A 79-amino-acid chain; its full sequence is Spidroin-1 (79 aa).

It belongs to the silk fibroin family. Major subunit, with spidroin 2, of the dragline silk.

The protein resides in the secreted. Its subcellular location is the extracellular space. Its function is as follows. Spiders' major ampullate silk possesses unique characteristics of strength and elasticity. Fibroin consists of pseudocrystalline regions of antiparallel beta-sheet interspersed with elastic amorphous segments. This chain is Spidroin-1, found in Araneus bicentenarius (Giant lichen orbweaver).